The chain runs to 236 residues: Small ribosomal subunit protein uS2c (236 aa).

This sequence belongs to the universal ribosomal protein uS2 family.

The protein localises to the plastid. It localises to the chloroplast. The chain is Small ribosomal subunit protein uS2c (rps2) from Amborella trichopoda.